Here is a 404-residue protein sequence, read N- to C-terminus: MRSQPHVLGIVLAGGEGKRLYPLTADRAKPAVPFGGAYRLIDFVLSNLVNAGYLRICVLTQYKSHSLDRHISQTWRLSGFAGEYITPVPAQQRLGPRWYTGSADAILQSLNLVYDEDPEYIVVFGADHVYRMDPEQMVQHHIESGAGVTVAGIRVPRSEAFAFGCIDSDESGRITQFLEKPAHPPGTPDDPNSTFASMGNYVFTTKVLVDAIRADSENSDSDHDMGGDIIPALVAAGEASVYDFKDNVVPGATDRDRGYWRDVGTLDAFYDAHMDLVSVHPIFNLYNRRWPIRGATENLAPAKFVKGGLAQESVVGAGSILSAATVRNSVLSSNVMIEDGATVEGSVLMPGVRIGKGAVVRRAILDKNVVVGDGEIIGVDLERDRERFAVSQGGVVAIGKGVWI.

Alpha-D-glucose 1-phosphate contacts are provided by residues tyrosine 99, glycine 164, 179–180 (EK), and serine 197.

It belongs to the bacterial/plant glucose-1-phosphate adenylyltransferase family. As to quaternary structure, homotetramer.

The enzyme catalyses alpha-D-glucose 1-phosphate + ATP + H(+) = ADP-alpha-D-glucose + diphosphate. Its pathway is glycan biosynthesis; glycogen biosynthesis. In terms of biological role, involved in the biosynthesis of ADP-glucose, a building block required for the elongation reactions to produce glycogen. Catalyzes the reaction between ATP and alpha-D-glucose 1-phosphate (G1P) to produce pyrophosphate and ADP-Glc. This Rhodococcus erythropolis (strain PR4 / NBRC 100887) protein is Glucose-1-phosphate adenylyltransferase.